The sequence spans 928 residues: MSSSANSIKVVARFRPQNRVEIESGGQPIVTFQGPDTCTVDSKEAQGSFTFDRVFDMSCKQSDIFDFSIKPTVDDILNGYNGTVFAYGQTGAGKSYTMMGTSIDDPDGRGVIPRIVEQIFTSILSSAANIEYTVRVSYMEIYMERIRDLLAPQNDNLPVHEEKNRGVYVKGLLEIYVSSVQEVYEVMRRGGNARAVAATNMNQESSRSHSIFVITITQKNVETGSAKSGQLFLVDLAGSEKVGKTGASGQTLEEAKKINKSLSALGMVINALTDGKSSHVPYRDSKLTRILQESLGGNSRTTLIINCSPSSYNDAETLSTLRFGMRAKSIKNKAKVNAELSPAELKQMLAKAKTQITSFENYIVNLESEVQVWRGGETVPKEKWVPPLELAITPSKSASTTARPSTPSRLLPESRAETPAISDRAGTPSLPLDKDEREEFLRRENELQDQIAEKESIAAAAERQLRETKEELIALKDHDSKLGKENERLISESNEFKMQLERLAFENKEAQITIDGLKDANSELTAELDEVKQQMLDMKMSAKETSAVLDEKEKKKAEKMAKMMAGFDLSGDVFSDNERAVADAIAQLDALFEISSAGDAIPPEDIKALREKLVETQGFVRQAELSSFSAASSDAEARKRAELEARLEALQQEHEELLSRNLTEADKEEVKALLAKSLSDKSAVQVELVEQLKADIALKNSETEHLKALVDDLQRRVKAGGAGVAMANGKTVQQQLAEFDVMKKSLMRDLQNRCERVVELEISLDETREQYNNVLRSSNNRAQQKKMAFLERNLEQLTQVQRQLVEQNSALKKEVAIAERKLMARNERIQSLESLLQESQEKMAQANHKFEVQLAAVKDRLEAAKAGSTRGLGTDAGLGGFSIGSRIAKPLRGGGDAVAGATATNPTIATLQQNPPENKRSSWFFQKS.

The region spanning 7–330 (SIKVVARFRP…LRFGMRAKSI (324 aa)) is the Kinesin motor domain. ATP is bound by residues 88-95 (GQTGAGKS) and 238-245 (GSEKVGKT). A coiled-coil region spans residues 343 to 866 (AELKQMLAKA…VKDRLEAAKA (524 aa)). The span at 395–409 (SKSASTTARPSTPSR) shows a compositional bias: low complexity. Disordered stretches follow at residues 395–434 (SKSA…PLDK) and 893–928 (GGGD…FQKS). Residues 905–928 (NPTIATLQQNPPENKRSSWFFQKS) are compositionally biased toward polar residues.

This sequence belongs to the TRAFAC class myosin-kinesin ATPase superfamily. Kinesin family. Kinesin subfamily.

Its subcellular location is the cytoplasm. The protein localises to the cytoskeleton. Its function is as follows. Kinesin is a microtubule-associated force-producing protein that may play a role in organelle transport. Its motor activity is directed toward the microtubule's plus end. The sequence is that of Kinesin heavy chain (kin) from Neurospora crassa (strain ATCC 24698 / 74-OR23-1A / CBS 708.71 / DSM 1257 / FGSC 987).